The following is a 643-amino-acid chain: MHLGDLKHPNELHGLSPAQLEDVARQIRERHLQVVSTSGGHLGPGLGVVELTLALYQTLDLDQDRVIWDVGHQAYPHKLITGRFNDFDSLRQQHGVAGYLKRTESDFDHFGAGHASTSISAALGMAMARDNHGESFKCVAVIGDGALTGGMALEAINHAGHLPNTRLLVVLNDNDMSISPPVGALSNVLNRARLSPPMQFLSGSVEESVRHLPFMGGEIPAELNRLKGSMRRLAVPKVGAVFEELGFTYMGPIDGHDIGEMVRTFQAAHREGGPVLVHVVTKKGKGYPYAEADQVGYHAQSAFDLGTGKAIPSSKPKPPSYSKVFGQTLVKLCEQNSRVIGITAAMATGTGLDLLQKAVPDQYVDVGIAEQHAVTLAAGMACEGLRPVVAIYSTFLQRAYDQLIHDVGIQKLPVTFVLDRAGIVGADGPTHQGQYDISYMRAIPNFTVMAPKDEAELQRMLVTCLQHDGPTALRIPRGSGEGVPLMEEGWETLPIGRGELLREGDDLMIVAYGSMVAPALATATLLEEAGLSTTVINARFLRPLDQALIHPLARRIPRVVTMEEGALPGGFGAAVLESLTDQDINVSMLRIGIPDKLVDHATPQQSKEALGLTPAQMAERILERFSNTSGDLPASASIKALQA.

Thiamine diphosphate is bound by residues histidine 72 and 113–115 (GHA). Aspartate 144 is a binding site for Mg(2+). Residues 145–146 (GA), asparagine 174, tyrosine 287, and glutamate 370 each bind thiamine diphosphate. Asparagine 174 is a Mg(2+) binding site.

It belongs to the transketolase family. DXPS subfamily. As to quaternary structure, homodimer. Requires Mg(2+) as cofactor. It depends on thiamine diphosphate as a cofactor.

It catalyses the reaction D-glyceraldehyde 3-phosphate + pyruvate + H(+) = 1-deoxy-D-xylulose 5-phosphate + CO2. Its pathway is metabolic intermediate biosynthesis; 1-deoxy-D-xylulose 5-phosphate biosynthesis; 1-deoxy-D-xylulose 5-phosphate from D-glyceraldehyde 3-phosphate and pyruvate: step 1/1. Functionally, catalyzes the acyloin condensation reaction between C atoms 2 and 3 of pyruvate and glyceraldehyde 3-phosphate to yield 1-deoxy-D-xylulose-5-phosphate (DXP). The sequence is that of 1-deoxy-D-xylulose-5-phosphate synthase from Synechococcus sp. (strain CC9605).